A 622-amino-acid polypeptide reads, in one-letter code: Apical membrane antigen 1 (622 aa).

The signal sequence occupies residues 1–24; sequence MRKLYCVLLLSAFEFTYMINFGRG. The Extracellular segment spans residues 25-546; the sequence is QNYWEHPYQN…EHKPTYDNMK (522 aa). 5 cysteine pairs are disulfide-bonded: Cys-149–Cys-302, Cys-217–Cys-247, Cys-263–Cys-275, Cys-320–Cys-418, and Cys-337–Cys-409. N-linked (GlcNAc...) asparagine glycosylation is found at Asn-286, Asn-371, Asn-421, Asn-422, and Asn-499. 3 disulfide bridges follow: Cys-443–Cys-502, Cys-490–Cys-507, and Cys-492–Cys-509. The helical transmembrane segment at 547 to 567 threads the bilayer; it reads IIIASSAAVAVLATILMVYLY. Residues 568 to 622 are Cytoplasmic-facing; the sequence is KRKGNAEKYDKMDEPQDYGKSTSRNDEMLDPEASFWGEEKRASHTTPVLMEKPYY. Residues 577 to 607 are disordered; that stretch reads DKMDEPQDYGKSTSRNDEMLDPEASFWGEEK.

This sequence belongs to the apicomplexan parasites AMA1 family.

It localises to the membrane. Involved in parasite invasion of erythrocytes. This Plasmodium falciparum (isolate thtn / Thailand) protein is Apical membrane antigen 1 (AMA-1).